Here is a 169-residue protein sequence, read N- to C-terminus: S-ribosylhomocysteine lyase (169 aa).

Positions 54, 58, and 128 each coordinate Fe cation.

The protein belongs to the LuxS family. Homodimer. The cofactor is Fe cation.

The catalysed reaction is S-(5-deoxy-D-ribos-5-yl)-L-homocysteine = (S)-4,5-dihydroxypentane-2,3-dione + L-homocysteine. In terms of biological role, involved in the synthesis of autoinducer 2 (AI-2) which is secreted by bacteria and is used to communicate both the cell density and the metabolic potential of the environment. The regulation of gene expression in response to changes in cell density is called quorum sensing. Catalyzes the transformation of S-ribosylhomocysteine (RHC) to homocysteine (HC) and 4,5-dihydroxy-2,3-pentadione (DPD). This is S-ribosylhomocysteine lyase from Shewanella piezotolerans (strain WP3 / JCM 13877).